A 364-amino-acid polypeptide reads, in one-letter code: Mannose-1-phosphate guanyltransferase (364 aa).

Belongs to the transferase hexapeptide repeat family.

The protein localises to the cytoplasm. It catalyses the reaction alpha-D-mannose 1-phosphate + GTP + H(+) = GDP-alpha-D-mannose + diphosphate. It participates in nucleotide-sugar biosynthesis; GDP-alpha-D-mannose biosynthesis; GDP-alpha-D-mannose from alpha-D-mannose 1-phosphate (GTP route): step 1/1. In terms of biological role, involved in cell wall synthesis where it is required for glycosylation. Involved in cell cycle progression through cell-size checkpoint. This is Mannose-1-phosphate guanyltransferase (mpg-1) from Neurospora crassa (strain ATCC 24698 / 74-OR23-1A / CBS 708.71 / DSM 1257 / FGSC 987).